The primary structure comprises 754 residues: Transcription factor MBP1 (754 aa).

One can recognise an HTH APSES-type domain in the interval 6–112; it reads IYSAKYSGVD…FTQQEGSASP (107 aa). The H-T-H motif DNA-binding region spans 37-58; it reads ATHILKAAKFPKAKRTRILEKE. 2 disordered regions span residues 105 to 215 and 239 to 301; these read QQEG…FGRS and LDIE…MQTP. A compositionally biased stretch (low complexity) spans 147–162; sequence SSQQQQPVSQQQQQQP. 2 stretches are compositionally biased toward polar residues: residues 177-187 and 203-215; these read ATVTLQRSQSE and TKLP…FGRS. Over residues 257–272 the composition is skewed to basic and acidic residues; it reads TKHEDNTHLMNTKDEP. Over residues 273–289 the composition is skewed to low complexity; sequence VSSSSSLPSSPSEFSQS. A compositionally biased stretch (polar residues) spans 290–301; the sequence is VAFGSRSNMQTP. ANK repeat units follow at residues 375–404 and 493–522; these read EHHT…SIRS and DGNS…LTTV.

As to quaternary structure, MBF contains SWI6 and MBP1.

The protein resides in the nucleus. Functionally, binds to MCB elements (Mlu I cell cycle box) found in the promoter of most DNA synthesis genes. Transcriptional activation by MBF has an important role in the transition from G1 to S phase. It may have a dual role in that it behaves as an activator of transcription at the G1-S boundary and as a repressor during other stages of the cell cycle. This is Transcription factor MBP1 (MBP1) from Kluyveromyces lactis (strain ATCC 8585 / CBS 2359 / DSM 70799 / NBRC 1267 / NRRL Y-1140 / WM37) (Yeast).